A 484-amino-acid chain; its full sequence is tRNA sulfurtransferase (484 aa).

The 105-residue stretch at 62 to 166 (GPVIDELVRI…DDSYHIAHRR (105 aa)) folds into the THUMP domain. Residues 184-185 (LI), K266, G288, and Q297 each bind ATP. C345 and C456 are joined by a disulfide. In terms of domain architecture, Rhodanese spans 404-482 (PSVDDVIIDV…GHGNIKVYAP (79 aa)). C456 serves as the catalytic Cysteine persulfide intermediate.

It belongs to the ThiI family.

It is found in the cytoplasm. It carries out the reaction [ThiI sulfur-carrier protein]-S-sulfanyl-L-cysteine + a uridine in tRNA + 2 reduced [2Fe-2S]-[ferredoxin] + ATP + H(+) = [ThiI sulfur-carrier protein]-L-cysteine + a 4-thiouridine in tRNA + 2 oxidized [2Fe-2S]-[ferredoxin] + AMP + diphosphate. The enzyme catalyses [ThiS sulfur-carrier protein]-C-terminal Gly-Gly-AMP + S-sulfanyl-L-cysteinyl-[cysteine desulfurase] + AH2 = [ThiS sulfur-carrier protein]-C-terminal-Gly-aminoethanethioate + L-cysteinyl-[cysteine desulfurase] + A + AMP + 2 H(+). It participates in cofactor biosynthesis; thiamine diphosphate biosynthesis. Functionally, catalyzes the ATP-dependent transfer of a sulfur to tRNA to produce 4-thiouridine in position 8 of tRNAs, which functions as a near-UV photosensor. Also catalyzes the transfer of sulfur to the sulfur carrier protein ThiS, forming ThiS-thiocarboxylate. This is a step in the synthesis of thiazole, in the thiamine biosynthesis pathway. The sulfur is donated as persulfide by IscS. This Marinobacter nauticus (strain ATCC 700491 / DSM 11845 / VT8) (Marinobacter aquaeolei) protein is tRNA sulfurtransferase.